The primary structure comprises 1134 residues: Mediator of RNA polymerase II transcription subunit 12 (1134 aa).

Belongs to the Mediator complex subunit 12 family. Component of the srb8-11 complex which consists of rb8, srb9(TRAP240), srb10 and srb11. The srb8-11 complex associates with the Mediator complex thereby blocking association with RNA polymerase II and leading to reduced transcriptional activation by Mediator.

It is found in the nucleus. Its function is as follows. Component of the srb8-11 complex. The srb8-11 complex is a regulatory module of the Mediator complex which is itself involved in regulation of basal and activated RNA polymerase II-dependent transcription. The srb8-11 complex may be involved in the transcriptional repression of a subset of genes regulated by Mediator. It may inhibit the association of the Mediator complex with RNA polymerase II to form the holoenzyme complex. This chain is Mediator of RNA polymerase II transcription subunit 12 (srb8), found in Schizosaccharomyces pombe (strain 972 / ATCC 24843) (Fission yeast).